We begin with the raw amino-acid sequence, 771 residues long: DnaJ homolog subfamily C member 16 (771 aa).

Positions 1-25 (MELKRLSISWQFLIVLVLILQSLSA) are cleaved as a signal peptide. Residues 26–532 (LDFDPYRVLG…ESLLHSNWRE (507 aa)) lie on the Cytoplasmic side of the membrane. A J domain is found at 29–93 (DPYRVLGVSR…EKRTNYDHYG (65 aa)). The Thioredoxin domain occupies 116–244 (FYFDESFFHF…LRQFVESLLP (129 aa)). A helical; Anchor for type IV membrane protein transmembrane segment spans residues 533 to 553 (MMPLLSLIFSALFILFGTVIV). Topologically, residues 554-771 (QAFSDSNEER…FYIPSWPELD (218 aa)) are extracellular. The interval 559–590 (SNEERESHPPDKEEVPEKAGKTEPSFTKESSS) is disordered. A compositionally biased stretch (basic and acidic residues) spans 560 to 579 (NEERESHPPDKEEVPEKAGK). N628 is a glycosylation site (N-linked (GlcNAc...) asparagine).

Its subcellular location is the endoplasmic reticulum membrane. Its function is as follows. Plays an important role in regulating the size of autophagosomes during the formation process. In Rattus norvegicus (Rat), this protein is DnaJ homolog subfamily C member 16 (Dnajc16).